The primary structure comprises 463 residues: tRNA-2-methylthio-N(6)-dimethylallyladenosine synthase (463 aa).

In terms of domain architecture, MTTase N-terminal spans 5–125 (RKLHIKSYGC…LPQLLAKAEQ (121 aa)). Residues Cys14, Cys50, Cys88, Cys166, Cys170, and Cys173 each contribute to the [4Fe-4S] cluster site. The Radical SAM core domain occupies 152–384 (RARGISAFVT…QQLIDQQQSA (233 aa)). In terms of domain architecture, TRAM spans 387-449 (KAAIGRTVEV…RYSLLGELAS (63 aa)).

It belongs to the methylthiotransferase family. MiaB subfamily. Monomer. It depends on [4Fe-4S] cluster as a cofactor.

It localises to the cytoplasm. It catalyses the reaction N(6)-dimethylallyladenosine(37) in tRNA + (sulfur carrier)-SH + AH2 + 2 S-adenosyl-L-methionine = 2-methylsulfanyl-N(6)-dimethylallyladenosine(37) in tRNA + (sulfur carrier)-H + 5'-deoxyadenosine + L-methionine + A + S-adenosyl-L-homocysteine + 2 H(+). Catalyzes the methylthiolation of N6-(dimethylallyl)adenosine (i(6)A), leading to the formation of 2-methylthio-N6-(dimethylallyl)adenosine (ms(2)i(6)A) at position 37 in tRNAs that read codons beginning with uridine. The sequence is that of tRNA-2-methylthio-N(6)-dimethylallyladenosine synthase from Rhodopseudomonas palustris (strain TIE-1).